Here is a 104-residue protein sequence, read N- to C-terminus: UPF0125 protein PSPTO_4512 (104 aa).

It belongs to the UPF0125 (RnfH) family.

This chain is UPF0125 protein PSPTO_4512, found in Pseudomonas syringae pv. tomato (strain ATCC BAA-871 / DC3000).